Here is a 160-residue protein sequence, read N- to C-terminus: uncharacterized protein (160 aa).

This is an uncharacterized protein from Escherichia coli (strain K12).